A 123-amino-acid chain; its full sequence is Glutaredoxin-like protein (123 aa).

Positions 27–123 (INEVEESITN…GTLFNDLKKK (97 aa)) constitute a Glutaredoxin domain.

Belongs to the glutaredoxin family.

The polypeptide is Glutaredoxin-like protein (grxB) (Dictyostelium discoideum (Social amoeba)).